The chain runs to 406 residues: DNA primase DnaG (406 aa).

The region spanning 167–253 is the Toprim domain; that stretch reads DAVVIVEGRA…CVEDLSRRTV (87 aa). Residues Glu173, Asp215, and Asp217 each contribute to the Mg(2+) site. A disordered region spans residues 259 to 309; the sequence is NKTPASAAAPIATTQSETAATDGSATPAPTPEPAPDTAPSPDSDGDDTEAA. The segment covering 261 to 272 has biased composition (low complexity); that stretch reads TPASAAAPIATT. Positions 286–296 are enriched in pro residues; the sequence is APTPEPAPDTA.

This sequence belongs to the archaeal DnaG primase family. As to quaternary structure, forms a ternary complex with MCM helicase and DNA. Requires Mg(2+) as cofactor.

It carries out the reaction ssDNA + n NTP = ssDNA/pppN(pN)n-1 hybrid + (n-1) diphosphate.. In terms of biological role, RNA polymerase that catalyzes the synthesis of short RNA molecules used as primers for DNA polymerase during DNA replication. The polypeptide is DNA primase DnaG (Halobacterium salinarum (strain ATCC 29341 / DSM 671 / R1)).